The chain runs to 62 residues: UPF0434 protein R03186 (62 aa).

The protein belongs to the UPF0434 family.

This is UPF0434 protein R03186 from Rhizobium meliloti (strain 1021) (Ensifer meliloti).